The primary structure comprises 325 residues: Elongation factor P--(R)-beta-lysine ligase (325 aa).

Residue 76 to 78 (SPE) participates in substrate binding. ATP contacts are provided by residues 100–102 (RNE) and asparagine 109. Residue tyrosine 118 coordinates substrate. Residue 244–245 (EL) coordinates ATP. Glutamate 251 serves as a coordination point for substrate. Residue glycine 300 coordinates ATP.

Belongs to the class-II aminoacyl-tRNA synthetase family. EpmA subfamily. In terms of assembly, homodimer.

The catalysed reaction is D-beta-lysine + L-lysyl-[protein] + ATP = N(6)-((3R)-3,6-diaminohexanoyl)-L-lysyl-[protein] + AMP + diphosphate + H(+). In terms of biological role, with EpmB is involved in the beta-lysylation step of the post-translational modification of translation elongation factor P (EF-P). Catalyzes the ATP-dependent activation of (R)-beta-lysine produced by EpmB, forming a lysyl-adenylate, from which the beta-lysyl moiety is then transferred to the epsilon-amino group of a conserved specific lysine residue in EF-P. The protein is Elongation factor P--(R)-beta-lysine ligase of Edwardsiella ictaluri (strain 93-146).